We begin with the raw amino-acid sequence, 561 residues long: Arginine--tRNA ligase (561 aa).

The 'HIGH' region motif lies at 129–139; it reads ANPTGPLHIGH.

It belongs to the class-I aminoacyl-tRNA synthetase family. Monomer.

It is found in the cytoplasm. It catalyses the reaction tRNA(Arg) + L-arginine + ATP = L-arginyl-tRNA(Arg) + AMP + diphosphate. This Geotalea daltonii (strain DSM 22248 / JCM 15807 / FRC-32) (Geobacter daltonii) protein is Arginine--tRNA ligase.